The following is a 489-amino-acid chain: Mitochondrial-processing peptidase subunit beta (489 aa).

The transit peptide at 1–45 directs the protein to the mitochondrion; it reads MAAAAVSRTLLPVAGRRLWGFTRRLPLRAAAAQPLYFGGDRLRST. A Zn(2+)-binding site is contributed by H101. The Proton acceptor role is filled by E104. Zn(2+) is bound by residues H105 and E181.

Belongs to the peptidase M16 family. Heterodimer of PMPCA (alpha) and PMPCB (beta) subunits, forming the mitochondrial processing protease (MPP) in which PMPCA is involved in substrate recognition and binding and PMPCB is the catalytic subunit. It depends on Zn(2+) as a cofactor.

It localises to the mitochondrion matrix. The enzyme catalyses Release of N-terminal transit peptides from precursor proteins imported into the mitochondrion, typically with Arg in position P2.. Binding to PMPCA is required for catalytic activity. Its function is as follows. Catalytic subunit of the essential mitochondrial processing protease (MPP), which cleaves the mitochondrial sequence off newly imported precursors proteins. Preferentially, cleaves after an arginine at position P2. Required for PINK1 turnover by coupling PINK1 mitochondrial import and cleavage, which results in subsequent PINK1 proteolysis. The sequence is that of Mitochondrial-processing peptidase subunit beta (Pmpcb) from Rattus norvegicus (Rat).